We begin with the raw amino-acid sequence, 465 residues long: tRNA (guanine(37)-N(1))-methyltransferase (465 aa).

Residues 1–20 (MDKNSQLRDMNLFRAPAARA) constitute a mitochondrion transit peptide. S-adenosyl-L-methionine contacts are provided by residues His-238 and 304 to 305 (DG). The segment at 326 to 345 (AVIKPPRPPRKSAAPPPEPV) is disordered. Residue Asn-359 participates in S-adenosyl-L-methionine binding.

It belongs to the class I-like SAM-binding methyltransferase superfamily. TRM5/TYW2 family. As to quaternary structure, monomer.

Its subcellular location is the mitochondrion matrix. The protein resides in the nucleus. The protein localises to the cytoplasm. The catalysed reaction is guanosine(37) in tRNA + S-adenosyl-L-methionine = N(1)-methylguanosine(37) in tRNA + S-adenosyl-L-homocysteine + H(+). Functionally, specifically methylates the N1 position of guanosine-37 in various cytoplasmic and mitochondrial tRNAs. Methylation is not dependent on the nature of the nucleoside 5' of the target nucleoside. This is the first step in the biosynthesis of wybutosine (yW), a modified base adjacent to the anticodon of tRNAs and required for accurate decoding. This Fusarium vanettenii (strain ATCC MYA-4622 / CBS 123669 / FGSC 9596 / NRRL 45880 / 77-13-4) (Fusarium solani subsp. pisi) protein is tRNA (guanine(37)-N(1))-methyltransferase.